Consider the following 402-residue polypeptide: Phosphoglycerate kinase (402 aa).

Residues 24-26 (DFN), R40, 63-66 (HFGR), R122, and R155 contribute to the substrate site. ATP contacts are provided by residues K206, G297, E328, and 357-360 (GGDS).

This sequence belongs to the phosphoglycerate kinase family. In terms of assembly, monomer.

It is found in the cytoplasm. It catalyses the reaction (2R)-3-phosphoglycerate + ATP = (2R)-3-phospho-glyceroyl phosphate + ADP. It functions in the pathway carbohydrate degradation; glycolysis; pyruvate from D-glyceraldehyde 3-phosphate: step 2/5. The protein is Phosphoglycerate kinase of Synechococcus sp. (strain CC9311).